Consider the following 377-residue polypeptide: Dihydroorotate dehydrogenase (quinone) (377 aa).

FMN-binding positions include alanine 78–lysine 82 and alanine 102. Lysine 82 contacts substrate. Substrate is bound at residue asparagine 127 to glycine 130. Positions 159 and 192 each coordinate FMN. Residue asparagine 192 coordinates substrate. Serine 195 acts as the Nucleophile in catalysis. Residue asparagine 197 coordinates substrate. Lysine 230 and threonine 258 together coordinate FMN. Asparagine 259–threonine 260 is a binding site for substrate. Residues glycine 288, glycine 317, and tyrosine 338 to threonine 339 contribute to the FMN site.

It belongs to the dihydroorotate dehydrogenase family. Type 2 subfamily. In terms of assembly, monomer. The cofactor is FMN.

The protein resides in the cell membrane. It carries out the reaction (S)-dihydroorotate + a quinone = orotate + a quinol. It participates in pyrimidine metabolism; UMP biosynthesis via de novo pathway; orotate from (S)-dihydroorotate (quinone route): step 1/1. In terms of biological role, catalyzes the conversion of dihydroorotate to orotate with quinone as electron acceptor. This is Dihydroorotate dehydrogenase (quinone) from Rippkaea orientalis (strain PCC 8801 / RF-1) (Cyanothece sp. (strain PCC 8801)).